A 72-amino-acid chain; its full sequence is Translation initiation factor IF-1 (72 aa).

The region spanning 1 to 72 is the S1-like domain; that stretch reads MAKEDVIEMQ…SKGRIVFRAR (72 aa).

This sequence belongs to the IF-1 family. In terms of assembly, component of the 30S ribosomal translation pre-initiation complex which assembles on the 30S ribosome in the order IF-2 and IF-3, IF-1 and N-formylmethionyl-tRNA(fMet); mRNA recruitment can occur at any time during PIC assembly.

It is found in the cytoplasm. One of the essential components for the initiation of protein synthesis. Stabilizes the binding of IF-2 and IF-3 on the 30S subunit to which N-formylmethionyl-tRNA(fMet) subsequently binds. Helps modulate mRNA selection, yielding the 30S pre-initiation complex (PIC). Upon addition of the 50S ribosomal subunit IF-1, IF-2 and IF-3 are released leaving the mature 70S translation initiation complex. This Pseudoalteromonas translucida (strain TAC 125) protein is Translation initiation factor IF-1.